We begin with the raw amino-acid sequence, 445 residues long: Glutamate--tRNA ligase 2 (445 aa).

The 'HIGH' region signature appears at 10–20; it reads PSPTGRLHVGN. The 'KMSKS' region motif lies at 241-245; it reads ALSKR. Lysine 244 is an ATP binding site.

The protein belongs to the class-I aminoacyl-tRNA synthetase family. Glutamate--tRNA ligase type 1 subfamily. As to quaternary structure, monomer.

Its subcellular location is the cytoplasm. It catalyses the reaction tRNA(Glu) + L-glutamate + ATP = L-glutamyl-tRNA(Glu) + AMP + diphosphate. In terms of biological role, catalyzes the attachment of glutamate to tRNA(Glu) in a two-step reaction: glutamate is first activated by ATP to form Glu-AMP and then transferred to the acceptor end of tRNA(Glu). The sequence is that of Glutamate--tRNA ligase 2 from Hyphomonas neptunium (strain ATCC 15444).